The primary structure comprises 307 residues: D-alanine--D-alanine ligase (307 aa).

The 201-residue stretch at 101 to 301 folds into the ATP-grasp domain; it reads KTVMRAAGVS…FGELVRWMVE (201 aa). Residue 127-182 participates in ATP binding; sequence PLTPPYVVKPIAEGSSMGVIIVREERSHPPQILASDEWVYGEEVLAETYIAGRELT. Positions 251, 268, and 270 each coordinate Mg(2+).

The protein belongs to the D-alanine--D-alanine ligase family. Requires Mg(2+) as cofactor. It depends on Mn(2+) as a cofactor.

The protein resides in the cytoplasm. It carries out the reaction 2 D-alanine + ATP = D-alanyl-D-alanine + ADP + phosphate + H(+). Its pathway is cell wall biogenesis; peptidoglycan biosynthesis. Its function is as follows. Cell wall formation. In Methylorubrum populi (strain ATCC BAA-705 / NCIMB 13946 / BJ001) (Methylobacterium populi), this protein is D-alanine--D-alanine ligase.